The sequence spans 443 residues: Transcriptional regulatory protein ZraR (443 aa).

The region spanning 7–121 is the Response regulatory domain; sequence DILVVDDDIS…KLQLTLSEAL (115 aa). The residue at position 56 (Asp56) is a 4-aspartylphosphate. A Sigma-54 factor interaction domain is found at 141 to 370; it reads MVGDSPAMRA…LENAVERAVV (230 aa). ATP-binding residues include Gly172, Thr173, Arg329, and Arg359. Residues 423-442 constitute a DNA-binding region (H-T-H motif); that stretch reads KTEAARRLGITRKTLLAKLS.

Post-translationally, phosphorylated by ZraS.

It localises to the cytoplasm. Activity of the ZraS/ZraR two-component system is repressed by the zinc-bound form of ZraP, which probably interacts with the periplasmic region of ZraS. In terms of biological role, part of the Zra signaling pathway, an envelope stress response (ESR) system composed of the periplasmic accessory protein ZraP, the histidine kinase ZraS and the transcriptional regulator ZraR. The ZraPSR system contributes to antibiotic resistance and is important for membrane integrity in the presence of membrane-targeting biocides. ZraR is a member of the two-component regulatory system ZraS/ZraR. When activated by ZraS, acts in conjunction with sigma-54 to regulate the expression of zraP in the presence of high Zn(2+) or Pb(2+) concentrations. Also positively autoregulates the expression of the zraSR operon. The protein is Transcriptional regulatory protein ZraR (zraR) of Klebsiella oxytoca.